Consider the following 870-residue polypeptide: Glycerol-3-phosphate acyltransferase (870 aa).

The tract at residues 1–27 (MPKKNSPLLPKETTPTQSSVDTSGSSN) is disordered. Residues 13–27 (TTPTQSSVDTSGSSN) are compositionally biased toward polar residues. Positions 351–356 (HRSHID) match the HXXXXD motif motif.

Belongs to the GPAT/DAPAT family.

Its subcellular location is the cell inner membrane. It catalyses the reaction sn-glycerol 3-phosphate + an acyl-CoA = a 1-acyl-sn-glycero-3-phosphate + CoA. It participates in phospholipid metabolism; CDP-diacylglycerol biosynthesis; CDP-diacylglycerol from sn-glycerol 3-phosphate: step 1/3. The sequence is that of Glycerol-3-phosphate acyltransferase (plsB) from Xylella fastidiosa (strain 9a5c).